We begin with the raw amino-acid sequence, 394 residues long: Major outer membrane porin, serovar B (394 aa).

Residues 1–22 (MKKLLKSVLVFAALSSASSLQA) form the signal peptide.

This sequence belongs to the chlamydial porin (CP) (TC 1.B.2) family. In terms of assembly, part of a disulfide cross-linked outer membrane complex (COMC) composed of the major outer membrane porin (MOMP), the small cysteine-rich protein (OmcA) and the large cysteine-rich periplasmic protein (OmcB).

It localises to the cell outer membrane. Its function is as follows. In elementary bodies (EBs, the infectious stage, which is able to survive outside the host cell) provides the structural integrity of the outer envelope through disulfide cross-links with the small cysteine-rich protein and the large cysteine-rich periplasmic protein. It has been described in publications as the Sarkosyl-insoluble COMC (Chlamydia outer membrane complex), and serves as the functional equivalent of peptidoglycan. Permits diffusion of specific solutes through the outer membrane. The protein is Major outer membrane porin, serovar B (ompA) of Chlamydia trachomatis.